Reading from the N-terminus, the 509-residue chain is Phosphoglycerate kinase, glycosomal (509 aa).

(2R)-3-phosphoglycerate contacts are provided by V32, D33, F34, N35, R48, S70, H71, G73, R74, R224, H260, and R261. Position 306 (G306) interacts with ADP. G306 is a binding site for CDP. K308 contributes to the (2R)-3-phosphoglycerate binding site. K308 provides a ligand contact to AMP. D311 serves as a coordination point for CDP. D311 serves as a coordination point for Mg(2+). ADP-binding residues include K312 and G330. Residue K312 coordinates AMP. K312 provides a ligand contact to ATP. Residue G330 participates in CDP binding. AMP-binding residues include A331 and A403. ATP-binding residues include A331 and A403. Residues A403 and N427 each contribute to the ADP site. CDP-binding residues include G428 and F433. ADP-binding residues include F433, E434, D466, and S467. E434 contacts AMP. ATP is bound by residues E434, D466, and S467. D466 lines the Mg(2+) pocket.

This sequence belongs to the phosphoglycerate kinase family. Monomer. Mg(2+) is required as a cofactor.

It localises to the glycosome. It catalyses the reaction (2R)-3-phosphoglycerate + ATP = (2R)-3-phospho-glyceroyl phosphate + ADP. The protein operates within carbohydrate degradation; glycolysis; pyruvate from D-glyceraldehyde 3-phosphate: step 2/5. This chain is Phosphoglycerate kinase, glycosomal (56PGK), found in Trypanosoma congolense.